A 235-amino-acid polypeptide reads, in one-letter code: MEAKLKTFFAEFGLSIEKEKIQLFERYYRLLISENEKYNLTAVTGEDEVIVKHFLDSTAVLIYRDLTDLNAVDIGTGAGFPGIPLKIMVPGLKLLLLDSLKKRCLFLERVVRELNLTNVTVINERAENLGRQKPFRELFDVTFSRAVAEVRVLLEFHAPLLRLGGETILFKGPGVDEELKKAEKAAKQLGMELKDVYYYRLPGNFGERSLVVYKKLQNTPENYPRRPGIPEKRPL.

Residues G75, F80, 126–127 (AE), and R145 each bind S-adenosyl-L-methionine.

This sequence belongs to the methyltransferase superfamily. RNA methyltransferase RsmG family.

The protein localises to the cytoplasm. Its function is as follows. Specifically methylates the N7 position of a guanine in 16S rRNA. This is Ribosomal RNA small subunit methyltransferase G from Carboxydothermus hydrogenoformans (strain ATCC BAA-161 / DSM 6008 / Z-2901).